A 614-amino-acid chain; its full sequence is DNA-directed DNA polymerase (614 aa).

The protein belongs to the DNA polymerase type-A family.

It carries out the reaction DNA(n) + a 2'-deoxyribonucleoside 5'-triphosphate = DNA(n+1) + diphosphate. In terms of biological role, replicates viral genomic DNA. This polymerase possesses two enzymatic activities: DNA synthesis (polymerase) and an exonucleolytic activity that degrades single-stranded DNA in the 3'-5' direction. In Escherichia coli (Escherichia coli phage phi32), this protein is DNA-directed DNA polymerase.